The sequence spans 263 residues: 3-deoxy-manno-octulosonate cytidylyltransferase (263 aa).

Belongs to the KdsB family.

The protein localises to the cytoplasm. It carries out the reaction 3-deoxy-alpha-D-manno-oct-2-ulosonate + CTP = CMP-3-deoxy-beta-D-manno-octulosonate + diphosphate. It functions in the pathway nucleotide-sugar biosynthesis; CMP-3-deoxy-D-manno-octulosonate biosynthesis; CMP-3-deoxy-D-manno-octulosonate from 3-deoxy-D-manno-octulosonate and CTP: step 1/1. The protein operates within bacterial outer membrane biogenesis; lipopolysaccharide biosynthesis. Functionally, activates KDO (a required 8-carbon sugar) for incorporation into bacterial lipopolysaccharide in Gram-negative bacteria. This Burkholderia cenocepacia (strain ATCC BAA-245 / DSM 16553 / LMG 16656 / NCTC 13227 / J2315 / CF5610) (Burkholderia cepacia (strain J2315)) protein is 3-deoxy-manno-octulosonate cytidylyltransferase.